A 255-amino-acid chain; its full sequence is Myogenic factor 5 (255 aa).

The 52-residue stretch at 83–134 folds into the bHLH domain; that stretch reads DRRKAATMRERRRLKKVNQAFETLKRCTTTNPNQRLPKVEILRNAIQYIESL. Positions 221–242 are enriched in low complexity; it reads SLPIPDSITPSPTSSTDSLPRS. Positions 221 to 246 are disordered; that stretch reads SLPIPDSITPSPTSSTDSLPRSPDAH.

In terms of assembly, efficient DNA binding requires dimerization with another bHLH protein.

It localises to the nucleus. Functionally, acts as a transcriptional activator that promotes transcription of muscle-specific target genes and plays a role in muscle differentiation. Induces fibroblasts to differentiate into myoblasts. Probable sequence specific DNA-binding protein. In Xenopus laevis (African clawed frog), this protein is Myogenic factor 5 (myf5).